The following is a 150-amino-acid chain: Nitric oxide reductase subunit C (150 aa).

Residues 13–29 (IFYGGSLFFFLLFAALT) traverse the membrane as a helical; Signal-anchor segment. 3 residues coordinate heme c: Cys62, Cys65, and His66.

Heterodimer of cytochromes b (large subunit) and c (small subunit).

It localises to the cell membrane. Component of the anaerobic respiratory chain that transforms nitrate to dinitrogen (denitrification). In Halomonas halodenitrificans (Paracoccus halodenitrificans), this protein is Nitric oxide reductase subunit C (norC).